We begin with the raw amino-acid sequence, 134 residues long: Large-conductance mechanosensitive channel (134 aa).

The next 2 membrane-spanning stretches (helical) occupy residues 16-36 (VIDL…VTAL) and 81-101 (GDFL…FIIV).

Belongs to the MscL family. Homopentamer.

The protein localises to the cell inner membrane. Channel that opens in response to stretch forces in the membrane lipid bilayer. May participate in the regulation of osmotic pressure changes within the cell. This is Large-conductance mechanosensitive channel from Xylella fastidiosa (strain M12).